The chain runs to 558 residues: SPATS2-like protein (558 aa).

Residue Ala2 is modified to N-acetylalanine. The span at 63–79 (GKKKNNKRKRSKSKQHQ) shows a compositional bias: basic residues. Disordered regions lie at residues 63–148 (GKKK…RGIT) and 161–202 (DGNP…SNAP). Basic and acidic residues-rich tracts occupy residues 80–92 (GNKDAKDKGERPE) and 110–142 (GCEKDSSSPDSAREKLALTPREKKISILEEPPR). A Phosphoserine modification is found at Ser120. Residues 279–344 (KEEAMDILTA…ARFSCDIEQL (66 aa)) adopt a coiled-coil conformation. The segment at 383-514 (KQGNFSRKSS…SEKARRRQHA (132 aa)) is disordered. Positions 416 to 433 (DACQQTMPTNKQQNGPSN) are enriched in polar residues. Ser455 carries the phosphoserine modification. Over residues 469–485 (HEHRRQPHNGFRPKNKG) the composition is skewed to basic residues.

Belongs to the SPATS2 family.

It is found in the cytoplasm. It localises to the nucleus. The protein resides in the nucleolus. In Rattus norvegicus (Rat), this protein is SPATS2-like protein (Spats2l).